Consider the following 658-residue polypeptide: MSDMFLPARMRKLKIITLDQYSDSVVRSLHEEGVTQIDDISERIQQDAEWRQILKPSRATPYTGRVSSLLMKTSGILDFLGSVAAEEKGLRDTIREFINPPIFEKREVEELDTESLIERAEETLGRVESETRVMEEKLNELDSERSAVESSLSVAEKLKDFDIDFSDLQDSEYITGIAGRITAENLPELRDKLADITDELVISDREGENKAERILIIVTLKKHADSIASVLRRMEFERFEISELQGRPSEIISSSKTRLEEISRERKEIISKLRDINAEWEDELLVLREQLEIEKERNEVFSLFGETRKTVMLEAWVPLKEADRVIAVVEESSEGTALTDLEDPDPEEVPVLLDNPRFAKPYETFVEMYSPLKYNEIDPTIFMAFVFPFFFGFCLTDAGYGIIDALIGFILYRGLGKVNNFMRNFGIIMMSCGVWAFILGMVTNGFIGDFFPRFFNITLPTVIPAIDAFVNPQNILIMALTVGVLHINFGLILGARNNIRLGNMREALGSQIVWLILELGIILYLVGGMIFGAPLIILAFAMLLYYNGLFGLMDVSGFLGTLLSYARLLALCLSTGGIAMTVNILTGLSYEMIPVIGVVLAPIIFVFGHIANNAFQSLGAFINSLRLHYVEFFAQFYMGGKNKFNAFRAERNFTKIRR.

Helical transmembrane passes span 383 to 403 (MAFV…YGII), 427 to 447 (IIMM…NGFI), 475 to 495 (ILIM…ILGA), 507 to 526 (ALGS…LYLV), 530 to 552 (IFGA…LFGL), 568 to 588 (LLAL…LTGL), and 591 to 611 (EMIP…GHIA).

The protein belongs to the V-ATPase 116 kDa subunit family. As to quaternary structure, has multiple subunits with at least A(3), B(3), C, D, E, F, H, I and proteolipid K(x).

It localises to the cell membrane. In terms of biological role, component of the A-type ATP synthase that produces ATP from ADP in the presence of a proton gradient across the membrane. The protein is A-type ATP synthase subunit I of Methanothermobacter thermautotrophicus (strain ATCC 29096 / DSM 1053 / JCM 10044 / NBRC 100330 / Delta H) (Methanobacterium thermoautotrophicum).